A 357-amino-acid polypeptide reads, in one-letter code: Selenide, water dikinase (357 aa).

Residue C25 is part of the active site. ATP-binding positions include K28 and 57 to 59; that span reads TAD. D60 serves as a coordination point for Mg(2+). ATP-binding positions include D77, D100, and 148 to 150; that span reads GHS. D100 is a Mg(2+) binding site. D236 lines the Mg(2+) pocket.

Belongs to the selenophosphate synthase 1 family. Class I subfamily. Homodimer. Mg(2+) is required as a cofactor.

It carries out the reaction hydrogenselenide + ATP + H2O = selenophosphate + AMP + phosphate + 2 H(+). Synthesizes selenophosphate from selenide and ATP. The polypeptide is Selenide, water dikinase (Pseudomonas straminea).